The following is a 308-amino-acid chain: MPDNMPEEQAHPTRCGFVALIGAPNVGKSTLVNALVGSKVTIVSRKVQTTRALIRGIVVEGNAQIVLVDTPGIFTPKRRLDRAMVSTAWSGAHDADMVCVLLDARAGLDEEAEAIFTKLEAVKHPKFLVINKIDLVAREKLLALAQRANERIAFRETFMVAALSGDGVDDLRRALAAAMPEGPYLYPEDQMSDAPLRHLAAEITREKIYRNLHQELPYQSTVETESWKEMRNGSVRIEQTIFVERDSQRKIVLGKGGATIKAIGADARKEIAEIVGQPVHLFLFVKVRDNWGDDPERYREMGLEFPKE.

Residues 14 to 181 (RCGFVALIGA…RRALAAAMPE (168 aa)) form the Era-type G domain. Residues 22–29 (GAPNVGKS) are G1. 22 to 29 (GAPNVGKS) provides a ligand contact to GTP. The segment at 48–52 (QTTRA) is G2. The tract at residues 69 to 72 (DTPG) is G3. GTP contacts are provided by residues 69–73 (DTPGI) and 131–134 (NKID). Residues 131-134 (NKID) are G4. The interval 160 to 162 (VAA) is G5. Residues 212–289 (LHQELPYQST…HLFLFVKVRD (78 aa)) enclose the KH type-2 domain.

The protein belongs to the TRAFAC class TrmE-Era-EngA-EngB-Septin-like GTPase superfamily. Era GTPase family. In terms of assembly, monomer.

The protein resides in the cytoplasm. The protein localises to the cell inner membrane. Functionally, an essential GTPase that binds both GDP and GTP, with rapid nucleotide exchange. Plays a role in 16S rRNA processing and 30S ribosomal subunit biogenesis and possibly also in cell cycle regulation and energy metabolism. The sequence is that of GTPase Era from Afipia carboxidovorans (strain ATCC 49405 / DSM 1227 / KCTC 32145 / OM5) (Oligotropha carboxidovorans).